A 1050-amino-acid chain; its full sequence is MDS1 and EVI1 complex locus protein EVI1-B (1050 aa).

3 consecutive C2H2-type zinc fingers follow at residues 21–48 (YHCE…GTPH), 75–97 (HECK…LLSH), and 103–125 (YKCD…QMSH). The C2H2-type 4; degenerate zinc finger occupies 131-155 (YECENCSKQVFTDPSNLQRHIRSQH). 2 consecutive C2H2-type zinc fingers follow at residues 161–183 (HACS…KHIH) and 189–211 (FVCE…KRMH). A C2H2-type 7; atypical zinc finger spans residues 218–240 (IKCKDCGQMFSTTSSLNKHRRFC). Disordered stretches follow at residues 371 to 421 (ITEN…SDKD) and 529 to 612 (PLKV…EKKD). Over residues 379–390 (RPHEKVSDHSES) the composition is skewed to basic and acidic residues. Positions 397–411 (STPSGSDLETTSGSD) are enriched in polar residues. The Nuclear localization signal motif lies at 420-433 (KDKLKENGKLYKDK). The segment covering 529-542 (PLKVEPESPKESKK) has biased composition (basic and acidic residues). The short motif at 551–555 (AFDLT) is the CTBP-binding motif 1 element. Over residues 564–576 (SPNAPSKSSAPTS) the composition is skewed to low complexity. The CTBP-binding motif 2 signature appears at 582–586 (PLDLS). Residues 588–598 (GSRSRATTTKQ) are compositionally biased toward polar residues. Residues 599-612 (TESRKNHIFGEKKD) are compositionally biased toward basic and acidic residues. C2H2-type zinc fingers lie at residues 731–753 (YTCR…LRTH), 759–782 (YRCK…RNIH), and 788–810 (FKCH…LKKH). Residues 928–951 (KSEVNCKVSPSRHDDDDDDEEEDF) are disordered.

As to quaternary structure, homooligomer. Interacts with ctbp.

It is found in the nucleus. The protein localises to the nucleus speckle. Its function is as follows. Transcriptional repressor during pronephros development. Plays a role in regionalization of the pronephros; may promote formation of the distal tubule and duct over formation of the glomus and proximal tubule. The sequence is that of MDS1 and EVI1 complex locus protein EVI1-B (mecom-b) from Xenopus laevis (African clawed frog).